Here is a 194-residue protein sequence, read N- to C-terminus: NADH-quinone oxidoreductase subunit B (194 aa).

Positions 1-26 are disordered; that stretch reads MGLTPSATKPEIAQAPQGIVDPSTGR. Residues C73, C74, C138, and C168 each contribute to the [4Fe-4S] cluster site.

The protein belongs to the complex I 20 kDa subunit family. As to quaternary structure, NDH-1 is composed of 14 different subunits. Subunits NuoB, C, D, E, F, and G constitute the peripheral sector of the complex. It depends on [4Fe-4S] cluster as a cofactor.

The protein localises to the cell inner membrane. It carries out the reaction a quinone + NADH + 5 H(+)(in) = a quinol + NAD(+) + 4 H(+)(out). Functionally, NDH-1 shuttles electrons from NADH, via FMN and iron-sulfur (Fe-S) centers, to quinones in the respiratory chain. The immediate electron acceptor for the enzyme in this species is believed to be ubiquinone. Couples the redox reaction to proton translocation (for every two electrons transferred, four hydrogen ions are translocated across the cytoplasmic membrane), and thus conserves the redox energy in a proton gradient. The sequence is that of NADH-quinone oxidoreductase subunit B from Xanthobacter autotrophicus (strain ATCC BAA-1158 / Py2).